The following is a 223-amino-acid chain: Serine/threonine/tyrosine-interacting protein B (223 aa).

One can recognise a Tyrosine-protein phosphatase domain in the interval 28-176 (EMQEILPGLF…LQEYEAIYLA (149 aa)).

It belongs to the protein-tyrosine phosphatase family. Non-receptor class subfamily.

Its function is as follows. Catalytically inactive phosphatase. This Xenopus laevis (African clawed frog) protein is Serine/threonine/tyrosine-interacting protein B (styx-b).